A 276-amino-acid chain; its full sequence is uncharacterized protein (276 aa).

In terms of domain architecture, AB hydrolase-1 spans 20–137; sequence PVLIFIPGAN…PPINTFLPDS (118 aa). The disordered stretch occupies residues 57 to 76; sequence GESELTEPLPDSASNPDSDY.

It belongs to the AB hydrolase superfamily.

This is an uncharacterized protein from Staphylococcus aureus (strain COL).